Consider the following 201-residue polypeptide: Protein Thf1 (201 aa).

Residues 174–201 adopt a coiled-coil conformation; sequence IYKSSISKMEQAKELIQEQRIKDKKKTL.

It belongs to the THF1 family.

Its function is as follows. May be involved in photosynthetic membrane biogenesis. The polypeptide is Protein Thf1 (Prochlorococcus marinus (strain MIT 9312)).